The following is a 273-amino-acid chain: 2,3,4,5-tetrahydropyridine-2,6-dicarboxylate N-succinyltransferase (273 aa).

Belongs to the transferase hexapeptide repeat family.

It localises to the cytoplasm. The enzyme catalyses (S)-2,3,4,5-tetrahydrodipicolinate + succinyl-CoA + H2O = (S)-2-succinylamino-6-oxoheptanedioate + CoA. The protein operates within amino-acid biosynthesis; L-lysine biosynthesis via DAP pathway; LL-2,6-diaminopimelate from (S)-tetrahydrodipicolinate (succinylase route): step 1/3. The chain is 2,3,4,5-tetrahydropyridine-2,6-dicarboxylate N-succinyltransferase from Acinetobacter baumannii (strain SDF).